Reading from the N-terminus, the 358-residue chain is Methionine aminopeptidase 2 (358 aa).

H109 contacts substrate. 3 residues coordinate a divalent metal cation: D130, D141, and H210. H218 lines the substrate pocket. Positions 243 and 339 each coordinate a divalent metal cation.

It belongs to the peptidase M24A family. Methionine aminopeptidase eukaryotic type 2 subfamily. The cofactor is Co(2+). Requires Zn(2+) as cofactor. Mn(2+) serves as cofactor. It depends on Fe(2+) as a cofactor.

The protein resides in the cytoplasm. It carries out the reaction Release of N-terminal amino acids, preferentially methionine, from peptides and arylamides.. Its function is as follows. Cotranslationally removes the N-terminal methionine from nascent proteins. The N-terminal methionine is often cleaved when the second residue in the primary sequence is small and uncharged (Met-Ala-, Cys, Gly, Pro, Ser, Thr, or Val). This is Methionine aminopeptidase 2 from Encephalitozoon intestinalis (strain ATCC 50506) (Microsporidian parasite).